The sequence spans 257 residues: Flap endonuclease Xni (257 aa).

Aspartate 112 contacts Mg(2+). Residues 169 to 256 (EQKKLVEFWA…LGFSLKQLRL (88 aa)) form the 5'-3' exonuclease domain. K(+) contacts are provided by phenylalanine 179, alanine 180, proline 188, valine 190, and isoleucine 193. Positions 192–197 (GIGTKS) are interaction with DNA.

Belongs to the Xni family. Requires Mg(2+) as cofactor. The cofactor is K(+).

Its function is as follows. Has flap endonuclease activity. During DNA replication, flap endonucleases cleave the 5'-overhanging flap structure that is generated by displacement synthesis when DNA polymerase encounters the 5'-end of a downstream Okazaki fragment. The protein is Flap endonuclease Xni of Pseudoalteromonas translucida (strain TAC 125).